A 290-amino-acid polypeptide reads, in one-letter code: Lipoyl synthase (290 aa).

Cys-34, Cys-39, Cys-45, Cys-60, Cys-64, Cys-67, and Ser-273 together coordinate [4Fe-4S] cluster. Residues Trp-46–Leu-262 enclose the Radical SAM core domain.

This sequence belongs to the radical SAM superfamily. Lipoyl synthase family. [4Fe-4S] cluster serves as cofactor.

The protein localises to the cytoplasm. It catalyses the reaction [[Fe-S] cluster scaffold protein carrying a second [4Fe-4S](2+) cluster] + N(6)-octanoyl-L-lysyl-[protein] + 2 oxidized [2Fe-2S]-[ferredoxin] + 2 S-adenosyl-L-methionine + 4 H(+) = [[Fe-S] cluster scaffold protein] + N(6)-[(R)-dihydrolipoyl]-L-lysyl-[protein] + 4 Fe(3+) + 2 hydrogen sulfide + 2 5'-deoxyadenosine + 2 L-methionine + 2 reduced [2Fe-2S]-[ferredoxin]. It functions in the pathway protein modification; protein lipoylation via endogenous pathway; protein N(6)-(lipoyl)lysine from octanoyl-[acyl-carrier-protein]: step 2/2. Catalyzes the radical-mediated insertion of two sulfur atoms into the C-6 and C-8 positions of the octanoyl moiety bound to the lipoyl domains of lipoate-dependent enzymes, thereby converting the octanoylated domains into lipoylated derivatives. In Wolbachia pipientis subsp. Culex pipiens (strain wPip), this protein is Lipoyl synthase.